A 266-amino-acid polypeptide reads, in one-letter code: Glucosamine-6-phosphate deaminase (266 aa).

The active-site Proton acceptor; for enolization step is the D72. Catalysis depends on D141, which acts as the For ring-opening step. H143 acts as the Proton acceptor; for ring-opening step in catalysis. E148 (for ring-opening step) is an active-site residue.

Belongs to the glucosamine/galactosamine-6-phosphate isomerase family. NagB subfamily. In terms of assembly, homohexamer.

The enzyme catalyses alpha-D-glucosamine 6-phosphate + H2O = beta-D-fructose 6-phosphate + NH4(+). Its pathway is amino-sugar metabolism; N-acetylneuraminate degradation; D-fructose 6-phosphate from N-acetylneuraminate: step 5/5. With respect to regulation, allosterically activated by N-acetylglucosamine 6-phosphate (GlcNAc6P). In terms of biological role, catalyzes the reversible isomerization-deamination of glucosamine 6-phosphate (GlcN6P) to form fructose 6-phosphate (Fru6P) and ammonium ion. This Vibrio cholerae serotype O1 (strain ATCC 39541 / Classical Ogawa 395 / O395) protein is Glucosamine-6-phosphate deaminase.